A 365-amino-acid chain; its full sequence is Probable tRNA pseudouridine synthase B (365 aa).

D43 functions as the Nucleophile in the catalytic mechanism. Residues 209-285 (YPKIVVKRSA…DHIFLEADDG (77 aa)) enclose the PUA domain. Positions 300-365 (SGSGLHKDIQ…GKERHGRDHQ (66 aa)) are disordered. Composition is skewed to basic and acidic residues over residues 304–318 (LHKD…KDTR), 326–336 (TGPEKTADRVW), and 354–365 (GGGKERHGRDHQ).

Belongs to the pseudouridine synthase TruB family. Type 2 subfamily.

The catalysed reaction is uridine(55) in tRNA = pseudouridine(55) in tRNA. Functionally, could be responsible for synthesis of pseudouridine from uracil-55 in the psi GC loop of transfer RNAs. In Thermoplasma acidophilum (strain ATCC 25905 / DSM 1728 / JCM 9062 / NBRC 15155 / AMRC-C165), this protein is Probable tRNA pseudouridine synthase B.